A 210-amino-acid polypeptide reads, in one-letter code: UPF0301 protein Mnod_6933 (210 aa).

This sequence belongs to the UPF0301 (AlgH) family.

The chain is UPF0301 protein Mnod_6933 from Methylobacterium nodulans (strain LMG 21967 / CNCM I-2342 / ORS 2060).